The primary structure comprises 446 residues: Tubulin alpha chain-like 3 (446 aa).

The MREC motif signature appears at 1-4 (MREC). Residues Gln11, Glu78, Ser147, Gly151, Thr152, Thr186, Asn213, and Asn235 each coordinate GTP. Residue Glu78 participates in Mg(2+) binding. Glu261 is an active-site residue.

It belongs to the tubulin family. Dimer of alpha and beta chains. A typical microtubule is a hollow water-filled tube with an outer diameter of 25 nm and an inner diameter of 15 nM. Alpha-beta heterodimers associate head-to-tail to form protofilaments running lengthwise along the microtubule wall with the beta-tubulin subunit facing the microtubule plus end conferring a structural polarity. Microtubules usually have 13 protofilaments but different protofilament numbers can be found in some organisms and specialized cells. The cofactor is Mg(2+). In terms of processing, some glutamate residues at the C-terminus are polyglutamylated, resulting in polyglutamate chains on the gamma-carboxyl group. Polyglutamylation plays a key role in microtubule severing by spastin (SPAST). SPAST preferentially recognizes and acts on microtubules decorated with short polyglutamate tails: severing activity by SPAST increases as the number of glutamates per tubulin rises from one to eight, but decreases beyond this glutamylation threshold. Glutamylation is also involved in cilia motility. Post-translationally, some glutamate residues at the C-terminus are monoglycylated but not polyglycylated due to the absence of functional TTLL10 in human. Monoglycylation is mainly limited to tubulin incorporated into cilia and flagella axonemes, which is required for their stability and maintenance. Flagella glycylation controls sperm motility. Both polyglutamylation and monoglycylation can coexist on the same protein on adjacent residues, and lowering glycylation levels increases polyglutamylation, and reciprocally.

Its subcellular location is the cytoplasm. It is found in the cytoskeleton. The enzyme catalyses GTP + H2O = GDP + phosphate + H(+). Tubulin is the major constituent of microtubules, a cylinder consisting of laterally associated linear protofilaments composed of alpha- and beta-tubulin heterodimers. Microtubules grow by the addition of GTP-tubulin dimers to the microtubule end, where a stabilizing cap forms. Below the cap, tubulin dimers are in GDP-bound state, owing to GTPase activity of alpha-tubulin. In Homo sapiens (Human), this protein is Tubulin alpha chain-like 3 (TUBAL3).